The primary structure comprises 624 residues: 1-deoxy-D-xylulose-5-phosphate synthase (624 aa).

Thiamine diphosphate is bound by residues His-80 and 121 to 123 (GHS). Position 152 (Asp-152) interacts with Mg(2+). Thiamine diphosphate is bound by residues 153-154 (GA), Asn-181, Tyr-289, and Glu-371. Asn-181 is a Mg(2+) binding site.

Belongs to the transketolase family. DXPS subfamily. In terms of assembly, homodimer. The cofactor is Mg(2+). Thiamine diphosphate is required as a cofactor.

The catalysed reaction is D-glyceraldehyde 3-phosphate + pyruvate + H(+) = 1-deoxy-D-xylulose 5-phosphate + CO2. The protein operates within metabolic intermediate biosynthesis; 1-deoxy-D-xylulose 5-phosphate biosynthesis; 1-deoxy-D-xylulose 5-phosphate from D-glyceraldehyde 3-phosphate and pyruvate: step 1/1. Functionally, catalyzes the acyloin condensation reaction between C atoms 2 and 3 of pyruvate and glyceraldehyde 3-phosphate to yield 1-deoxy-D-xylulose-5-phosphate (DXP). The sequence is that of 1-deoxy-D-xylulose-5-phosphate synthase from Blochmanniella pennsylvanica (strain BPEN).